The sequence spans 388 residues: MNLHEYQAKQLFREYGLPVPQGIACDTAEEAVSAASQIGGDKWVIKCQVHAGGRGKAGGVELVSTKDGLREFAHKWLGKNLVTFQTDANGQPVNKLLVESCSDIANELYLGAVIDRASQRVTFMASTEGGVEIEKVAEETPELIHTAMIDPLVGAQAYQGRELAFKLGLSGKQIGQFTKIFLGLATLFEEKDLSLLEINPLVVTAQDDLICLDGKISIDSNAMYRQKALHAINDTTQDDEREMHAAQWELNYVALDGSIGCMVNGAGLAMGTMDIVHLHGGNPANFLDVGGGATKERVTEAFKIILSDDNVKAVLVNIFGGIVRCDLIADGVIGAVAEVGVTVPVIVRLEGNNADLGRKILAESGLNIIAAASLTDAAEQAVKAVGGK.

Residues 9-244 (KQLFREYGLP…TTQDDEREMH (236 aa)) form the ATP-grasp domain. Residues Lys46, 53-55 (GRG), Glu99, Ser102, and Glu107 each bind ATP. Residues Asn199 and Asp213 each coordinate Mg(2+). Substrate contacts are provided by residues Asn264 and 321–323 (GIV).

Belongs to the succinate/malate CoA ligase beta subunit family. Heterotetramer of two alpha and two beta subunits. Mg(2+) serves as cofactor.

It carries out the reaction succinate + ATP + CoA = succinyl-CoA + ADP + phosphate. The enzyme catalyses GTP + succinate + CoA = succinyl-CoA + GDP + phosphate. It functions in the pathway carbohydrate metabolism; tricarboxylic acid cycle; succinate from succinyl-CoA (ligase route): step 1/1. In terms of biological role, succinyl-CoA synthetase functions in the citric acid cycle (TCA), coupling the hydrolysis of succinyl-CoA to the synthesis of either ATP or GTP and thus represents the only step of substrate-level phosphorylation in the TCA. The beta subunit provides nucleotide specificity of the enzyme and binds the substrate succinate, while the binding sites for coenzyme A and phosphate are found in the alpha subunit. The chain is Succinate--CoA ligase [ADP-forming] subunit beta from Psychromonas ingrahamii (strain DSM 17664 / CCUG 51855 / 37).